The sequence spans 95 residues: Co-chaperonin GroES (95 aa).

Belongs to the GroES chaperonin family. As to quaternary structure, heptamer of 7 subunits arranged in a ring. Interacts with the chaperonin GroEL.

It localises to the cytoplasm. Functionally, together with the chaperonin GroEL, plays an essential role in assisting protein folding. The GroEL-GroES system forms a nano-cage that allows encapsulation of the non-native substrate proteins and provides a physical environment optimized to promote and accelerate protein folding. GroES binds to the apical surface of the GroEL ring, thereby capping the opening of the GroEL channel. This is Co-chaperonin GroES from Novosphingobium aromaticivorans (strain ATCC 700278 / DSM 12444 / CCUG 56034 / CIP 105152 / NBRC 16084 / F199).